The following is a 63-amino-acid chain: Protease 2 small chain (63 aa).

The Peptidase S8 domain maps to 11–63 (QWGLSGTYGIRANTAWDNGYQGQGKIIAVVDTGITDHPDLLANRTSPLGYDFI).

This sequence belongs to the peptidase S8 family. Heterodimer of a large and a small chain.

Its subcellular location is the secreted. The polypeptide is Protease 2 small chain (Achromobacter lyticus).